A 280-amino-acid polypeptide reads, in one-letter code: Elongation factor Ts (280 aa).

Residues 79 to 82 are involved in Mg(2+) ion dislocation from EF-Tu; the sequence is TDFV.

The protein belongs to the EF-Ts family.

It is found in the cytoplasm. Its function is as follows. Associates with the EF-Tu.GDP complex and induces the exchange of GDP to GTP. It remains bound to the aminoacyl-tRNA.EF-Tu.GTP complex up to the GTP hydrolysis stage on the ribosome. This chain is Elongation factor Ts, found in Vibrio vulnificus (strain CMCP6).